Here is a 346-residue protein sequence, read N- to C-terminus: S-adenosylmethionine:tRNA ribosyltransferase-isomerase (346 aa).

This sequence belongs to the QueA family. In terms of assembly, monomer.

It is found in the cytoplasm. It carries out the reaction 7-aminomethyl-7-carbaguanosine(34) in tRNA + S-adenosyl-L-methionine = epoxyqueuosine(34) in tRNA + adenine + L-methionine + 2 H(+). Its pathway is tRNA modification; tRNA-queuosine biosynthesis. Its function is as follows. Transfers and isomerizes the ribose moiety from AdoMet to the 7-aminomethyl group of 7-deazaguanine (preQ1-tRNA) to give epoxyqueuosine (oQ-tRNA). This chain is S-adenosylmethionine:tRNA ribosyltransferase-isomerase, found in Shewanella denitrificans (strain OS217 / ATCC BAA-1090 / DSM 15013).